The primary structure comprises 467 residues: Fumarate hydratase class II (467 aa).

Residues 98–100 (SGT), Arg126, 129–132 (HPND), 139–141 (SSN), and Thr187 each bind substrate. His188 serves as the catalytic Proton donor/acceptor. Ser318 is an active-site residue. Substrate-binding positions include Ser319 and 324–326 (KVN).

Belongs to the class-II fumarase/aspartase family. Fumarase subfamily. Homotetramer.

The protein resides in the cytoplasm. The catalysed reaction is (S)-malate = fumarate + H2O. Its pathway is carbohydrate metabolism; tricarboxylic acid cycle; (S)-malate from fumarate: step 1/1. Inhibited by ATP, citrate and S-2,3-dicarboxyaziridine. Involved in the TCA cycle. FumC seems to be a backup enzyme for FumA under conditions of iron limitation and oxidative stress. Catalyzes the stereospecific interconversion of fumarate to L-malate. The sequence is that of Fumarate hydratase class II from Escherichia coli (strain K12).